The primary structure comprises 354 residues: Biotin synthase (354 aa).

Positions 41 to 265 (NEVQISRLLS…IMPHSRVRLS (225 aa)) constitute a Radical SAM core domain. The [4Fe-4S] cluster site is built by cysteine 56, cysteine 60, and cysteine 63. Cysteine 100, cysteine 131, cysteine 191, and arginine 263 together coordinate [2Fe-2S] cluster.

It belongs to the radical SAM superfamily. Biotin synthase family. As to quaternary structure, homodimer. The cofactor is [4Fe-4S] cluster. [2Fe-2S] cluster serves as cofactor.

It catalyses the reaction (4R,5S)-dethiobiotin + (sulfur carrier)-SH + 2 reduced [2Fe-2S]-[ferredoxin] + 2 S-adenosyl-L-methionine = (sulfur carrier)-H + biotin + 2 5'-deoxyadenosine + 2 L-methionine + 2 oxidized [2Fe-2S]-[ferredoxin]. It participates in cofactor biosynthesis; biotin biosynthesis; biotin from 7,8-diaminononanoate: step 2/2. Catalyzes the conversion of dethiobiotin (DTB) to biotin by the insertion of a sulfur atom into dethiobiotin via a radical-based mechanism. This Shewanella sediminis (strain HAW-EB3) protein is Biotin synthase.